Reading from the N-terminus, the 641-residue chain is MNKQQKPKRSPLRPDYLVIVIIILLAIGMYFFFTEMMAPKVKQFDEFEFIAAIESGQIATVRSEYVGGDNFNLWEVTGTFTTGNAPEGVGSYVIILYGDRLNNIQDIIITYNELNPSTPITVSFVPHVSVDFWNIISTLLLIAAPIVLVVIMFRSMSSQSNKAQDFTKNRAKLSQGRKVKFSDIAGADEEKAEMAELIDFLKNPKKYADMGARVPKGVLLVGQPGTGKTLLAKAVAGEAQVPFFSISGSDFVELYVGVGASRVRDLFKVAKQSAPCIIFIDEIDAVGRQRGAGMGGGNDEREQTLNQLLVEMDGFSANLGIIIMAATNRPDVLDPALLRPGRFDRQITMQVPDQKSREEILKVHARSKKLDPTIKFSEVAMRIPGFTGADIENLLNEAALLAARESRTVISMQDIDEAADRVTMGPAKKSRKYSPNEKKMVAYHEAGHAVIGLKVNLASTVQKVTIVPRGRAGGYALYTPVEEKFNYAKSELLAMITSALGGRVAEEIMFDDVTTGAYDDFKRATKLARSMVTEYGMSDLGPIQYESDSGNVFLGRDYLKDKNFSDAVALEIDREVRAIITECYEHARKVINENKNLLDNIAKYLIAVETLTKTDIDEIAATGQLQWWDNREVEEDSKKSE.

Over 1-16 (MNKQQKPKRSPLRPDY) the chain is Cytoplasmic. The helical transmembrane segment at 17–37 (LVIVIIILLAIGMYFFFTEMM) threads the bilayer. The Extracellular segment spans residues 38 to 131 (APKVKQFDEF…VSFVPHVSVD (94 aa)). Residues 132 to 152 (FWNIISTLLLIAAPIVLVVIM) form a helical membrane-spanning segment. Residues 153–641 (FRSMSSQSNK…EVEEDSKKSE (489 aa)) lie on the Cytoplasmic side of the membrane. ATP is bound at residue 222 to 229 (GQPGTGKT). Residue His444 coordinates Zn(2+). Glu445 is a catalytic residue. Zn(2+)-binding residues include His448 and Asp520.

It in the central section; belongs to the AAA ATPase family. The protein in the C-terminal section; belongs to the peptidase M41 family. Homohexamer. Zn(2+) serves as cofactor.

Its subcellular location is the cell membrane. Functionally, acts as a processive, ATP-dependent zinc metallopeptidase for both cytoplasmic and membrane proteins. Plays a role in the quality control of integral membrane proteins. This chain is ATP-dependent zinc metalloprotease FtsH, found in Acholeplasma laidlawii (strain PG-8A).